The chain runs to 1164 residues: Shugoshin 2A (1164 aa).

A coiled-coil region spans residues leucine 62–asparagine 113. 5 disordered regions span residues serine 160–arginine 269, histidine 287–arginine 314, arginine 390–arginine 492, threonine 521–threonine 541, and proline 917–glycine 992. Over residues serine 182–serine 198 the composition is skewed to low complexity. Composition is skewed to polar residues over residues aspartate 238–glutamate 247 and glutamine 288–asparagine 299. The segment covering arginine 390–serine 412 has biased composition (basic and acidic residues). The segment covering cysteine 443–asparagine 472 has biased composition (polar residues). A compositionally biased stretch (basic and acidic residues) spans arginine 525–threonine 541. The segment covering glycine 934–glycine 948 has biased composition (polar residues). Phosphoserine is present on serine 1042. Residues isoleucine 1092 to arginine 1164 are disordered. Residues threonine 1112 to threonine 1125 are compositionally biased toward low complexity. The span at asparagine 1126–histidine 1140 shows a compositional bias: polar residues.

This sequence belongs to the shugoshin family. In terms of assembly, part of an astrin (SPAG5)-kinastrin (SKAP) complex containing KNSTRN, SPAG5, PLK1, DYNLL1 and SGO2A. Interacts with CDCA8. Interacts with PPP2CA. In terms of tissue distribution, ubiquitously expressed in proliferating cells. Highly expressed in the testis and oocytes.

Its subcellular location is the nucleus. It localises to the chromosome. It is found in the centromere. The protein localises to the kinetochore. Cooperates with PPP2CA to protect centromeric cohesin from separase-mediated cleavage in oocytes specifically during meiosis I. Has a crucial role in protecting REC8 at centromeres from cleavage by separase. During meiosis, protects centromeric cohesion complexes until metaphase II/anaphase II transition, preventing premature release of meiosis-specific REC8 cohesin complexes from anaphase I centromeres. Is thus essential for an accurate gametogenesis. May act by targeting PPP2CA to centromeres, thus leading to cohesin dephosphorylation. Essential for recruiting KIF2C to the inner centromere and for correcting defective kinetochore attachments. Involved in centromeric enrichment of AUKRB in prometaphase. In Mus musculus (Mouse), this protein is Shugoshin 2A.